The primary structure comprises 493 residues: 3-octaprenyl-4-hydroxybenzoate carboxy-lyase (493 aa).

Position 172 (Asn172) interacts with Mn(2+). Residues 175–177 (IYR), 189–191 (RWL), and 194–195 (RG) contribute to the prenylated FMN site. Glu238 lines the Mn(2+) pocket. Asp287 acts as the Proton donor in catalysis.

Belongs to the UbiD family. Homohexamer. Prenylated FMN is required as a cofactor. Mn(2+) serves as cofactor.

The protein resides in the cell membrane. It catalyses the reaction a 4-hydroxy-3-(all-trans-polyprenyl)benzoate + H(+) = a 2-(all-trans-polyprenyl)phenol + CO2. Its pathway is cofactor biosynthesis; ubiquinone biosynthesis. In terms of biological role, catalyzes the decarboxylation of 3-octaprenyl-4-hydroxy benzoate to 2-octaprenylphenol, an intermediate step in ubiquinone biosynthesis. The chain is 3-octaprenyl-4-hydroxybenzoate carboxy-lyase from Shewanella halifaxensis (strain HAW-EB4).